Consider the following 260-residue polypeptide: Rhythmically expressed gene 2 protein (260 aa).

The chain is Rhythmically expressed gene 2 protein (Reg-2) from Drosophila melanogaster (Fruit fly).